The primary structure comprises 744 residues: Protein pthb1 homolog (744 aa).

Basic and acidic residues predominate over residues 722-733 (EHSPKELPKIRE). The disordered stretch occupies residues 722-744 (EHSPKELPKIREEEEEEEQQVTA). A compositionally biased stretch (acidic residues) spans 734–744 (EEEEEEQQVTA).

In terms of assembly, part of BBSome complex, that contains bbs-1, bbs-2, bbs-4, bbs-5, osm-12, bbs-8/ttc-8 and bbs-9. Interacts with bbs-1.

Its function is as follows. Component of the BBSome complex. The BBSome complex is thought to function as a coat complex required for sorting of specific membrane proteins to the primary cilia. The BBSome complex is required for ciliogenesis but is dispensable for centriolar satellite function. Required for proper BBSome complex assembly and its ciliary localization. Required for cilia biogenesis and both the assembly and movement of intraflagellar transport proteins along the ciliary axoneme. In ciliated sensory neurons, required for the sensation of nitric oxide and avoidance of NO-producing organisms like P.aeruginosa. This chain is Protein pthb1 homolog, found in Caenorhabditis elegans.